A 144-amino-acid chain; its full sequence is uncharacterized protein (144 aa).

The tract at residues 90 to 144 (KKEYSALKKSGKIHKVGGSKSSGHRKTKKPKKSMKGGSKTKKLSEKQLMKELLAM) is disordered. Over residues 98–130 (KSGKIHKVGGSKSSGHRKTKKPKKSMKGGSKTK) the composition is skewed to basic residues.

This is an uncharacterized protein from Sputnik virophage.